We begin with the raw amino-acid sequence, 238 residues long: MAFTFKQFHIDDMNCGMAVGTDSVVLGAWAQLTAAKTVLDIGAGSGLLSLMAAQRCQAHITSVELDTSAAEACQHNFHNSPWANRLTLVNSSIQEFCQQIEYQEYFDHIICNPPYFEQGTQAIQSQRAMARHTDSLSFTALLDAIHVCLAPQGNASLILPMQSMARLNEILAHSPLSLIEMTNLISIVGKSANRVLCVLAHKTHPQIATKISDITIRELSGQYTQTMVQLIRDFYLKY.

The protein belongs to the methyltransferase superfamily. tRNA (adenine-N(6)-)-methyltransferase family.

Its subcellular location is the cytoplasm. The enzyme catalyses adenosine(37) in tRNA1(Val) + S-adenosyl-L-methionine = N(6)-methyladenosine(37) in tRNA1(Val) + S-adenosyl-L-homocysteine + H(+). Its function is as follows. Specifically methylates the adenine in position 37 of tRNA(1)(Val) (anticodon cmo5UAC). This chain is tRNA1(Val) (adenine(37)-N6)-methyltransferase, found in Shewanella baltica (strain OS223).